A 296-amino-acid polypeptide reads, in one-letter code: Giardin subunit alpha-3 (296 aa).

Annexin repeat units lie at residues aspartate 3–tryptophan 72, glutamate 74–lysine 146, asparagine 153–tyrosine 222, and glycine 226–arginine 295.

The protein belongs to the annexin family. Giardin subunit alpha subfamily.

It is found in the cytoplasm. Its subcellular location is the cytoskeleton. Giardins are involved in parasite attachment to the intestinal mucosa and in the cytoskeletal disassembly and reassembly that marks the transition from infectious trophozoite to transmissible cyst. They may interact with other cytoskeletal proteins such as microtubules in the microribbons or crossbridges, to maintain the integrity of the ventral disk. This Giardia intestinalis (Giardia lamblia) protein is Giardin subunit alpha-3.